A 533-amino-acid chain; its full sequence is NEDD8-activating enzyme E1 regulatory subunit (533 aa).

The interval 330–343 is interaction with uba3; that stretch reads DMIADSDKFIKLQN.

This sequence belongs to the ubiquitin-activating E1 family. ULA1 subfamily. As to quaternary structure, heterodimer of uba3 and nae1. The complex binds nedd8 and ube2m.

It participates in protein modification; protein neddylation. Regulatory subunit of the dimeric uba3-nae1 E1 enzyme. E1 activates nedd8 by first adenylating its C-terminal glycine residue with ATP, thereafter linking this residue to the side chain of the catalytic cysteine, yielding a nedd8-uba3 thioester and free AMP. E1 finally transfers nedd8 to the catalytic cysteine of ube2m. The covalent attachment of nedd8 to target proteins is known as 'neddylation' and the process is involved in the regulation of cell growth, viability and development. This Danio rerio (Zebrafish) protein is NEDD8-activating enzyme E1 regulatory subunit (nae1).